A 750-amino-acid polypeptide reads, in one-letter code: Photosystem I P700 chlorophyll a apoprotein A1 (750 aa).

8 consecutive transmembrane segments (helical) span residues 70 to 93 (VFSA…FHGA), 156 to 179 (LYCT…FHYH), 195 to 219 (LNHH…HVSL), 291 to 309 (IAHH…GHMY), 346 to 369 (WHAQ…HHMY), 385 to 411 (LSLF…IFMV), 433 to 455 (AIIS…LYIH), and 531 to 549 (FLVH…LILL). The [4Fe-4S] cluster site is built by Cys-573 and Cys-582. Transmembrane regions (helical) follow at residues 589 to 610 (HVFL…HFSW) and 664 to 686 (LSAY…MFLF). His-675 provides a ligand contact to chlorophyll a'. Chlorophyll a contacts are provided by Met-683 and Tyr-691. A phylloquinone-binding site is contributed by Trp-692. A helical membrane pass occupies residues 724–744 (AVGVTHYLLGGIATTWAFFLA).

Belongs to the PsaA/PsaB family. In terms of assembly, the PsaA/B heterodimer binds the P700 chlorophyll special pair and subsequent electron acceptors. PSI consists of a core antenna complex that captures photons, and an electron transfer chain that converts photonic excitation into a charge separation. The eukaryotic PSI reaction center is composed of at least 11 subunits. The cofactor is P700 is a chlorophyll a/chlorophyll a' dimer, A0 is one or more chlorophyll a, A1 is one or both phylloquinones and FX is a shared 4Fe-4S iron-sulfur center..

It is found in the plastid. The protein resides in the chloroplast thylakoid membrane. It carries out the reaction reduced [plastocyanin] + hnu + oxidized [2Fe-2S]-[ferredoxin] = oxidized [plastocyanin] + reduced [2Fe-2S]-[ferredoxin]. In terms of biological role, psaA and PsaB bind P700, the primary electron donor of photosystem I (PSI), as well as the electron acceptors A0, A1 and FX. PSI is a plastocyanin-ferredoxin oxidoreductase, converting photonic excitation into a charge separation, which transfers an electron from the donor P700 chlorophyll pair to the spectroscopically characterized acceptors A0, A1, FX, FA and FB in turn. Oxidized P700 is reduced on the lumenal side of the thylakoid membrane by plastocyanin. This chain is Photosystem I P700 chlorophyll a apoprotein A1, found in Morus indica (Mulberry).